A 466-amino-acid chain; its full sequence is Gamma-aminobutyric acid permease (466 aa).

Topologically, residues 2 to 20 (GQSSQPHELGGGLKSRHVT) are cytoplasmic. 2 consecutive transmembrane segments (helical) span residues 21–41 (MLSI…VAIA) and 42–62 (EAGP…VMIM). Residues 63-96 (RMLAEMAVATPDTGSFSTYADKAIGRWAGYTIGW) lie on the Cytoplasmic side of the membrane. The chain crosses the membrane as a helical span at residues 97–117 (LYWWFWVLVIPLEANIAAMIL). Residue His118 is a topological domain, periplasmic. Residues 119–139 (SWVPGIPIWLFSLVITLALTG) traverse the membrane as a helical segment. Over 140 to 153 (SNLLSVKNYGEFEF) the chain is Cytoplasmic. Residues 154–174 (WLALCKVIAILAFIFLGAVAI) traverse the membrane as a helical segment. Residues 175–199 (SGFYPYAEVSGISRLWDSGGFMPNG) are Periplasmic-facing. The chain crosses the membrane as a helical span at residues 200 to 220 (FGAVLSAMLITMFSFMGAEIV). Residues 221–246 (TIAAAESDTPEKHIVRATNSVIWRIS) lie on the Cytoplasmic side of the membrane. A helical transmembrane segment spans residues 247 to 267 (IFYLCSIFVVVALIPWNMPGL). The Periplasmic segment spans residues 268-286 (KAVGSYRSVLELLNIPHAK). Residues 287–307 (LIMDCVILLSVTSCLNSALYT) traverse the membrane as a helical segment. At 308–334 (ASRMLYSLSRRGDAPAVMGKINRSKTP) the chain is on the cytoplasmic side. Residues 335–355 (YVAVLLSTGAAFLTVVVNYYA) traverse the membrane as a helical segment. At 356–358 (PAK) the chain is on the periplasmic side. Residues 359–379 (VFKFLIDSSGAIALLVYLVIA) traverse the membrane as a helical segment. Over 380 to 402 (VSQLRMRKILRAEGSEIRLRMWL) the chain is Cytoplasmic. Residues 403-423 (YPWLTWLVIGFITFVLVVMLF) form a helical membrane-spanning segment. Topologically, residues 424–428 (RPAQQ) are periplasmic. Residues 429–449 (LEVISTGLLAIGIICTVPIMA) form a helical membrane-spanning segment. At 450–466 (RWKKLVLWQKTPVHNTR) the chain is on the cytoplasmic side.

The protein belongs to the amino acid-polyamine-organocation (APC) superfamily. Amino acid transporter (AAT) (TC 2.A.3.1) family. Monomer.

Its subcellular location is the cell inner membrane. The catalysed reaction is 4-aminobutanoate(in) + H(+)(in) = 4-aminobutanoate(out) + H(+)(out). Its pathway is amino-acid degradation; 4-aminobutanoate degradation. Uptake is stimulated by ammonium sulfate and abolished by 2,4-dinitrophenol. Is affected both topologically and kinetically by phospholipid composition of the membrane. In cells lacking phosphatidylethanolamine (PE), the N-terminal hairpin is inverted relative to the membrane and the rate of GABA transport is reduced by more than 99%. Functionally, transporter for gamma-aminobutyrate (GABA). Transport is driven by the membrane potential. Can also transport a number of GABA analogs such as nipecotic acid or muscimol. The chain is Gamma-aminobutyric acid permease from Escherichia coli (strain K12).